A 544-amino-acid chain; its full sequence is Chaperonin GroEL (544 aa).

ATP is bound by residues 29–32 (TLGP), lysine 50, 86–90 (DGTTT), glycine 414, 479–481 (DAA), and aspartate 495.

It belongs to the chaperonin (HSP60) family. Forms a cylinder of 14 subunits composed of two heptameric rings stacked back-to-back. Interacts with the co-chaperonin GroES.

It is found in the cytoplasm. The enzyme catalyses ATP + H2O + a folded polypeptide = ADP + phosphate + an unfolded polypeptide.. Its function is as follows. Together with its co-chaperonin GroES, plays an essential role in assisting protein folding. The GroEL-GroES system forms a nano-cage that allows encapsulation of the non-native substrate proteins and provides a physical environment optimized to promote and accelerate protein folding. This Treponema denticola (strain ATCC 35405 / DSM 14222 / CIP 103919 / JCM 8153 / KCTC 15104) protein is Chaperonin GroEL.